A 259-amino-acid chain; its full sequence is MDLLSRARKINAMLQTATGKSVNFNEMSASLRDVIRGNVYIVSRRGKLLGFAVNQEIENERMKSMLEERQFPEEYTRGLHDIRETTPNLDIESTHTVFPVENKELFKDGLTTIVPIIGGGERLGTLILGRVNESFSDDDLLLGEYGATVVGMEILHEKTEEIEMEARSKAVVQMAISSLSYSELEAIDHIFEELNGKEGLLVASKIADRVGITRSVIVNALRKLESAGVIESRSLGMKGTYIKVLNDKFLVELEKLRSR.

The interval 1–155 is GAF domain; the sequence is MDLLSRARKI…GATVVGMEIL (155 aa). The H-T-H motif DNA-binding region spans 203 to 222; sequence ASKIADRVGITRSVIVNALR. At S215 the chain carries Phosphoserine.

The protein belongs to the CodY family.

The protein resides in the cytoplasm. DNA-binding global transcriptional regulator which is involved in the adaptive response to starvation and acts by directly or indirectly controlling the expression of numerous genes in response to nutrient availability. During rapid exponential growth, CodY is highly active and represses genes whose products allow adaptation to nutrient depletion. This chain is Global transcriptional regulator CodY, found in Oceanobacillus iheyensis (strain DSM 14371 / CIP 107618 / JCM 11309 / KCTC 3954 / HTE831).